Consider the following 245-residue polypeptide: Geranylgeranylglyceryl phosphate synthase (245 aa).

Mg(2+) is bound by residues Asp20 and Ser50. Sn-glycerol 1-phosphate is bound by residues 169 to 175, 202 to 203, and 224 to 225; these read YLEAGSG, GG, and GT.

Belongs to the GGGP/HepGP synthase family. Group II subfamily. Requires Mg(2+) as cofactor.

It localises to the cytoplasm. It catalyses the reaction sn-glycerol 1-phosphate + (2E,6E,10E)-geranylgeranyl diphosphate = sn-3-O-(geranylgeranyl)glycerol 1-phosphate + diphosphate. It participates in membrane lipid metabolism; glycerophospholipid metabolism. In terms of biological role, prenyltransferase that catalyzes the transfer of the geranylgeranyl moiety of geranylgeranyl diphosphate (GGPP) to the C3 hydroxyl of sn-glycerol-1-phosphate (G1P). This reaction is the first ether-bond-formation step in the biosynthesis of archaeal membrane lipids. This chain is Geranylgeranylglyceryl phosphate synthase, found in Ignicoccus hospitalis (strain KIN4/I / DSM 18386 / JCM 14125).